An 887-amino-acid chain; its full sequence is Alanine--tRNA ligase (887 aa).

Positions 581, 585, 683, and 687 each coordinate Zn(2+).

Belongs to the class-II aminoacyl-tRNA synthetase family. Requires Zn(2+) as cofactor.

It localises to the cytoplasm. It carries out the reaction tRNA(Ala) + L-alanine + ATP = L-alanyl-tRNA(Ala) + AMP + diphosphate. Functionally, catalyzes the attachment of alanine to tRNA(Ala) in a two-step reaction: alanine is first activated by ATP to form Ala-AMP and then transferred to the acceptor end of tRNA(Ala). Also edits incorrectly charged Ser-tRNA(Ala) and Gly-tRNA(Ala) via its editing domain. This is Alanine--tRNA ligase from Ehrlichia canis (strain Jake).